A 173-amino-acid polypeptide reads, in one-letter code: Large ribosomal subunit protein uL10 (173 aa).

Belongs to the universal ribosomal protein uL10 family. In terms of assembly, part of the ribosomal stalk of the 50S ribosomal subunit. The N-terminus interacts with L11 and the large rRNA to form the base of the stalk. The C-terminus forms an elongated spine to which L12 dimers bind in a sequential fashion forming a multimeric L10(L12)X complex.

Forms part of the ribosomal stalk, playing a central role in the interaction of the ribosome with GTP-bound translation factors. In Micrococcus luteus (strain ATCC 4698 / DSM 20030 / JCM 1464 / CCM 169 / CCUG 5858 / IAM 1056 / NBRC 3333 / NCIMB 9278 / NCTC 2665 / VKM Ac-2230) (Micrococcus lysodeikticus), this protein is Large ribosomal subunit protein uL10.